We begin with the raw amino-acid sequence, 383 residues long: Chaperone protein DnaJ (383 aa).

A J domain is found at Asp5–Gly70. The CR-type zinc-finger motif lies at Gly137–Glu215. Zn(2+) is bound by residues Cys150, Cys153, Cys167, Cys170, Cys189, Cys192, Cys203, and Cys206. 4 CXXCXGXG motif repeats span residues Cys150–Gly157, Cys167–Gly174, Cys189–Gly196, and Cys203–Gly210.

Belongs to the DnaJ family. Homodimer. Zn(2+) is required as a cofactor.

The protein localises to the cytoplasm. Functionally, participates actively in the response to hyperosmotic and heat shock by preventing the aggregation of stress-denatured proteins and by disaggregating proteins, also in an autonomous, DnaK-independent fashion. Unfolded proteins bind initially to DnaJ; upon interaction with the DnaJ-bound protein, DnaK hydrolyzes its bound ATP, resulting in the formation of a stable complex. GrpE releases ADP from DnaK; ATP binding to DnaK triggers the release of the substrate protein, thus completing the reaction cycle. Several rounds of ATP-dependent interactions between DnaJ, DnaK and GrpE are required for fully efficient folding. Also involved, together with DnaK and GrpE, in the DNA replication of plasmids through activation of initiation proteins. This is Chaperone protein DnaJ from Paramagnetospirillum magneticum (strain ATCC 700264 / AMB-1) (Magnetospirillum magneticum).